Reading from the N-terminus, the 870-residue chain is Elastin (870 aa).

Positions 1–27 (MAGLTAAVPQPGVLLILLLNLLHPAQP) are cleaved as a signal peptide. Pro39 and Pro75 each carry 4-hydroxyproline. Pro87 carries the hydroxyproline modification. Pro105 is modified (4-hydroxyproline). Allysine is present on residues Lys122 and Lys126. 4-hydroxyproline is present on residues Pro207, Pro220, Pro223, and Pro244. Allysine occurs at positions 290 and 309. Pro338 is modified (4-hydroxyproline). Lys360 and Lys363 each carry allysine. At Pro375 the chain carries Hydroxyproline. 2 positions are modified to 4-hydroxyproline: Pro402 and Pro408. Hydroxyproline occurs at positions 413 and 418. Lys434, Lys438, Lys441, Lys485, and Lys488 each carry allysine. 4-hydroxyproline is present on residues Pro518 and Pro539. Allysine occurs at positions 554, 558, 615, 619, and 623. A 4-hydroxyproline mark is found at Pro637, Pro646, Pro662, and Pro670. 2 positions are modified to allysine: Lys677 and Lys680. Pro715 carries the 4-hydroxyproline modification. 4 positions are modified to allysine: Lys730, Lys734, Lys793, and Lys796. Residue Pro842 is modified to 4-hydroxyproline. Cys860 and Cys865 are oxidised to a cystine.

This sequence belongs to the elastin family. As to quaternary structure, the polymeric elastin chains are cross-linked together into an extensible 3D network. Forms a ternary complex with BGN and MFAP2. Interacts with MFAP2 via divalent cations (calcium &gt; magnesium &gt; manganese) in a dose-dependent and saturating manner. Interacts with FBLN5 and FBN1. Forms a ternary complex with FBN1 and FBLN2 or FBLN5. Interacts with MFAP4 in a Ca (2+)-dependent manner; this interaction promotes ELN self-assembly. Interacts with EFEMP2 with moderate affinity. Elastin is formed through the cross-linking of its soluble precursor tropoelastin. Cross-linking is initiated through the action of lysyl oxidase on exposed lysines to form allysine. Subsequent spontaneous condensation reactions with other allysine or unmodified lysine residues result in various bi-, tri-, and tetrafunctional cross-links. The most abundant cross-links in mature elastin fibers are lysinonorleucine, allysine aldol, desmosine, and isodesmosine. In terms of processing, hydroxylation on proline residues within the sequence motif, GXPG, is most likely to be 4-hydroxy as this fits the requirement for 4-hydroxylation in vertebrates.

It is found in the secreted. The protein localises to the extracellular space. Its subcellular location is the extracellular matrix. Functionally, major structural protein of tissues such as aorta and nuchal ligament, which must expand rapidly and recover completely. Molecular determinant of the late arterial morphogenesis, stabilizing arterial structure by regulating proliferation and organization of vascular smooth muscle. The polypeptide is Elastin (Eln) (Rattus norvegicus (Rat)).